The following is a 130-amino-acid chain: uncharacterized protein (130 aa).

The disordered stretch occupies residues M1–P104. Residues R88 to R97 are compositionally biased toward low complexity.

This is an uncharacterized protein from Homo sapiens (Human).